Here is a 493-residue protein sequence, read N- to C-terminus: V-type proton ATPase subunit B (493 aa).

This sequence belongs to the ATPase alpha/beta chains family. In terms of assembly, V-ATPase is a heteromultimeric enzyme composed of a peripheral catalytic V1 complex (main components: subunits A, B, C, D, E, and F) attached to an integral membrane V0 proton pore complex (main component: the proteolipid protein).

The protein resides in the cytoplasmic vesicle membrane. It localises to the endosome membrane. The protein localises to the contractile vacuole membrane. Functionally, vacuolar ATPase is responsible for acidifying a variety of intracellular compartments in eukaryotic cells. The B subunit is non-catalytic but combines with other subunits to form the catalytic complex. V-ATPase is responsible for energizing electrophoretic K(+)/2H(+) antiport by generating a transmembrane voltage of more than 200 mV. The protein is V-type proton ATPase subunit B (vatB) of Dictyostelium discoideum (Social amoeba).